A 570-amino-acid polypeptide reads, in one-letter code: Double-stranded RNA-binding protein Staufen homolog 2 (570 aa).

Residues threonine 8–leucine 75 form the DRBM 1 domain. Disordered stretches follow at residues threonine 71–isoleucine 94 and asparagine 181–aspartate 203. Polar residues predominate over residues proline 83 to isoleucine 94. In terms of domain architecture, DRBM 2 spans threonine 95 to asparagine 181. Phosphoserine is present on serine 188. Positions serine 194–aspartate 203 are enriched in basic and acidic residues. 2 DRBM domains span residues serine 207 to lysine 274 and asparagine 307 to tyrosine 375. 2 consecutive short sequence motifs (nuclear localization signal) follow at residues lysine 273–arginine 291 and leucine 373–isoleucine 412. The interval leucine 381–valine 570 is required for dendritic transport. Residues lysine 387–proline 409 form a disordered region. Serine 395 is subject to Phosphoserine. Residue threonine 405 is modified to Phosphothreonine. Phosphoserine occurs at positions 416, 426, 440, 455, and 492. The tract at residues aspartate 528 to valine 570 is disordered. A compositionally biased stretch (basic and acidic residues) spans glycine 536–aspartate 550.

Interacts with the exportin XPO5. This requires RNA and RAN bound to GTP. Interacts with microtubules. Isoform 2 and isoform 3 may also interact with ribosomes, and this association is independent of translation. Identified in a mRNP complex, at least composed of DHX9, DDX3X, ELAVL1, HNRNPU, IGF2BP1, ILF3, PABPC1, PCBP2, PTBP2, STAU1, STAU2, SYNCRIP and YBX1. Interacts with TRIM71 (via NHL repeats) in an RNA-dependent manner.

It localises to the cytoplasm. The protein resides in the nucleus. It is found in the nucleolus. Its subcellular location is the endoplasmic reticulum. In terms of biological role, RNA-binding protein required for the microtubule-dependent transport of neuronal RNA from the cell body to the dendrite. As protein synthesis occurs within the dendrite, the localization of specific mRNAs to dendrites may be a prerequisite for neurite outgrowth and plasticity at sites distant from the cell body. This chain is Double-stranded RNA-binding protein Staufen homolog 2 (STAU2), found in Homo sapiens (Human).